The primary structure comprises 71 residues: uncharacterized protein (71 aa).

This is an uncharacterized protein from Enterobacteria phage T4 (Bacteriophage T4).